The chain runs to 344 residues: Heat-inducible transcription repressor HrcA (344 aa).

Belongs to the HrcA family.

Its function is as follows. Negative regulator of class I heat shock genes (grpE-dnaK-dnaJ and groELS operons). Prevents heat-shock induction of these operons. The protein is Heat-inducible transcription repressor HrcA of Streptococcus equi subsp. zooepidemicus (strain MGCS10565).